Here is a 266-residue protein sequence, read N- to C-terminus: 2-C-methyl-D-erythritol 4-phosphate cytidylyltransferase (266 aa).

A compositionally biased stretch (basic and acidic residues) spans 234–251; it reads ADDARSAEARSAEARSEE. Positions 234-266 are disordered; it reads ADDARSAEARSAEARSEEPQFAGARSTDARSGG.

It belongs to the IspD/TarI cytidylyltransferase family. IspD subfamily.

The catalysed reaction is 2-C-methyl-D-erythritol 4-phosphate + CTP + H(+) = 4-CDP-2-C-methyl-D-erythritol + diphosphate. It participates in isoprenoid biosynthesis; isopentenyl diphosphate biosynthesis via DXP pathway; isopentenyl diphosphate from 1-deoxy-D-xylulose 5-phosphate: step 2/6. Catalyzes the formation of 4-diphosphocytidyl-2-C-methyl-D-erythritol from CTP and 2-C-methyl-D-erythritol 4-phosphate (MEP). The protein is 2-C-methyl-D-erythritol 4-phosphate cytidylyltransferase of Frankia casuarinae (strain DSM 45818 / CECT 9043 / HFP020203 / CcI3).